We begin with the raw amino-acid sequence, 488 residues long: uncharacterized protein (488 aa).

12 helical membrane-spanning segments follow: residues 2 to 22 (FGLP…VFLV), 27 to 47 (VHAF…GGMS), 59 to 79 (FGGT…MGSV), 106 to 126 (LAIT…FVIL), 176 to 196 (IGAM…GIVL), 241 to 261 (LLPI…HLFV), 275 to 295 (IVSF…ISVY), 314 to 334 (VKTA…GAVL), 347 to 367 (IANL…LVRF), 368 to 388 (IQGS…PILA), 438 to 458 (VPTT…NLIF), and 461 to 481 (DGSV…LFYI).

The protein belongs to the GntP permease family.

Its subcellular location is the cell inner membrane. This is an uncharacterized protein from Haemophilus influenzae (strain ATCC 51907 / DSM 11121 / KW20 / Rd).